A 273-amino-acid polypeptide reads, in one-letter code: Putative phosphoenolpyruvate synthase regulatory protein (273 aa).

153–160 contributes to the ADP binding site; that stretch reads GVSRSGKT.

The protein belongs to the pyruvate, phosphate/water dikinase regulatory protein family. PSRP subfamily.

It carries out the reaction [pyruvate, water dikinase] + ADP = [pyruvate, water dikinase]-phosphate + AMP + H(+). It catalyses the reaction [pyruvate, water dikinase]-phosphate + phosphate + H(+) = [pyruvate, water dikinase] + diphosphate. Its function is as follows. Bifunctional serine/threonine kinase and phosphorylase involved in the regulation of the phosphoenolpyruvate synthase (PEPS) by catalyzing its phosphorylation/dephosphorylation. The sequence is that of Putative phosphoenolpyruvate synthase regulatory protein from Leptothrix cholodnii (strain ATCC 51168 / LMG 8142 / SP-6) (Leptothrix discophora (strain SP-6)).